A 314-amino-acid chain; its full sequence is Ribosomal RNA small subunit methyltransferase H (314 aa).

S-adenosyl-L-methionine-binding positions include 35–37, aspartate 55, phenylalanine 79, aspartate 101, and glutamine 108; that span reads GGH.

This sequence belongs to the methyltransferase superfamily. RsmH family.

Its subcellular location is the cytoplasm. It carries out the reaction cytidine(1402) in 16S rRNA + S-adenosyl-L-methionine = N(4)-methylcytidine(1402) in 16S rRNA + S-adenosyl-L-homocysteine + H(+). Specifically methylates the N4 position of cytidine in position 1402 (C1402) of 16S rRNA. This Pectobacterium carotovorum subsp. carotovorum (strain PC1) protein is Ribosomal RNA small subunit methyltransferase H.